A 145-amino-acid chain; its full sequence is MDHYLKKLEDIYKKLEGHPFLFSPSKTNEKEFITLLNQALASTQLYRSIQQLFLTMYKLDPIGFINYIKTSKQEYLCLLINPKLVTKFLKITSFKIYINFRLKTFYISPNKYNNFYTAPSEEKANHLLKEEKTWAKIVEEGGEES.

It belongs to the asfivirus K145R family.

It is found in the virion. This is an uncharacterized protein from Ornithodoros (relapsing fever ticks).